Consider the following 625-residue polypeptide: SWR1-complex protein 3 (625 aa).

4 disordered regions span residues 1–53 (MPAV…EVGN), 194–234 (KELK…KENK), 254–273 (KLKE…MHDP), and 324–434 (NPVN…NAIK). Basic residues predominate over residues 20–31 (SRTRTRSRRGKR). The span at 35 to 53 (DDDDDDDEESDDAYDEVGN) shows a compositional bias: acidic residues. Composition is skewed to basic and acidic residues over residues 194 to 214 (KELK…ERKR) and 221 to 234 (IAKE…KENK). The span at 261 to 270 (NKQGSPSSSM) shows a compositional bias: polar residues. Over residues 342-352 (KAKDVAEDHRL) the composition is skewed to basic and acidic residues. A compositionally biased stretch (polar residues) spans 353-364 (NSITLVKSSKTA). 2 stretches are compositionally biased toward basic and acidic residues: residues 368 to 388 (PEPK…EAKT) and 396 to 420 (DVKK…KEDN).

The protein belongs to the SWC3 family. Component of the SWR1 chromatin remodeling complex composed of at least ACT1, ARP4, RVB1, RVB2, ARP6, YAF9, VPS71, VPS72, SWC3, SWC4, SWC5, SWC7 and SWR1, and perhaps BDF1.

The protein localises to the nucleus. In terms of biological role, component of the SWR1 complex which mediates the ATP-dependent exchange of histone H2A for the H2A variant HZT1 leading to transcriptional regulation of selected genes by chromatin remodeling. Involved in chromosome stability. The polypeptide is SWR1-complex protein 3 (SWC3) (Saccharomyces cerevisiae (strain ATCC 204508 / S288c) (Baker's yeast)).